The chain runs to 249 residues: Coproheme decarboxylase (249 aa).

Fe-coproporphyrin III-binding positions include arginine 131, 145 to 149 (YPMDK), histidine 172, and glutamine 185. Tyrosine 145 is a catalytic residue.

The protein belongs to the ChdC family. Type 1 subfamily. Fe-coproporphyrin III serves as cofactor.

It carries out the reaction Fe-coproporphyrin III + 2 H2O2 + 2 H(+) = heme b + 2 CO2 + 4 H2O. The enzyme catalyses Fe-coproporphyrin III + H2O2 + H(+) = harderoheme III + CO2 + 2 H2O. It catalyses the reaction harderoheme III + H2O2 + H(+) = heme b + CO2 + 2 H2O. Its pathway is porphyrin-containing compound metabolism; protoheme biosynthesis. Involved in coproporphyrin-dependent heme b biosynthesis. Catalyzes the decarboxylation of Fe-coproporphyrin III (coproheme) to heme b (protoheme IX), the last step of the pathway. The reaction occurs in a stepwise manner with a three-propionate intermediate. The sequence is that of Coproheme decarboxylase from Staphylococcus haemolyticus (strain JCSC1435).